A 367-amino-acid polypeptide reads, in one-letter code: Germination protease (367 aa).

A propeptide spanning residues Met1 to Asp15 is cleaved from the precursor.

Belongs to the peptidase A25 family. In terms of assembly, homotetramer. Autoproteolytically processed. The inactive tetrameric zymogen termed p46 autoprocesses to a smaller form termed p41, which is active only during spore germination.

The enzyme catalyses Endopeptidase action with P4 Glu or Asp, P1 preferably Glu &gt; Asp, P1' hydrophobic and P2' Ala.. Functionally, initiates the rapid degradation of small, acid-soluble proteins during spore germination. This chain is Germination protease, found in Bacillus cereus (strain ATCC 10987 / NRS 248).